A 453-amino-acid chain; its full sequence is Glucose N-acetyltransferase 1-B (453 aa).

At 1–8 (MLKRKVRY) the chain is on the cytoplasmic side. The helical; Signal-anchor for type II membrane protein transmembrane segment at 9 to 29 (LLLIVVVFTGIILSVEAIMRF) threads the bilayer. Residues 30-453 (QLNKNVDYYL…LESRAICQVN (424 aa)) lie on the Lumenal side of the membrane. Residues Asn108, Asn126, and Asn176 are each glycosylated (N-linked (GlcNAc...) asparagine). A DXD motif is present at residues 187–189 (DND).

Belongs to the GNT1 family.

Its subcellular location is the golgi apparatus membrane. It localises to the vacuole membrane. In terms of biological role, N-acetylglucosaminyltransferase involved in the Golgi-specific modification of N-linked glycans. This is Glucose N-acetyltransferase 1-B (GNT1-B) from Kluyveromyces lactis (strain ATCC 8585 / CBS 2359 / DSM 70799 / NBRC 1267 / NRRL Y-1140 / WM37) (Yeast).